The following is a 670-amino-acid chain: WD repeat-containing protein 48 homolog (670 aa).

WD repeat units follow at residues 13-52 (RHRN…SQEP), 59-98 (HHND…CMST), 101-140 (THRD…ALTA), 152-191 (GSKD…KIAK), 194-233 (GHTE…CIQT), 236-275 (VHSE…NSVL), and 278-317 (EERA…KLSN). The tract at residues 321–348 (SSNSSINSGGGGDGTPVTNSASNATPAS) is disordered. A compositionally biased stretch (low complexity) spans 338 to 348 (TNSASNATPAS). The WD 8 repeat unit spans residues 359–398 (KGGAAIKKYHVLNDKRFMLTKDSEQNVAIYDVLKVKKVED). Residues 613 to 625 (GGGGGSSTGGGGN) show a composition bias toward gly residues. The disordered stretch occupies residues 613–645 (GGGGGSSTGGGGNSNSSQNNSQSDANSEGSQVP). Over residues 626 to 635 (SNSSQNNSQS) the composition is skewed to low complexity.

This sequence belongs to the WD repeat WDR48 family. In terms of assembly, catalytic component of the Usp12-46 deubiquitylase complex consisting of Usp12-46, Wdr20 and Uaf1; regulatory subunit that, together wtih Wdr20, stabilizes Usp12-46. The Usp12-46 deubiquitylase complex associates with arr/arrow; the interaction leads to deubiquitination and stabilization of arr/arrow.

In terms of biological role, regulatory component of the Usp12-46 deubiquitylase complex. activates deubiquitination by increasing the catalytic turnover without increasing the affinity of deubiquitinating enzymes for the substrate. The complex deubiquitylates the wg/wingless-signaling receptor arr/arrow, which stabilizes the receptor and increases its concentration at the cell surface; this enhances the sensitivity of cells to wg/wingless-signal stimulation. This increases the amplitude and spatial range of the signaling response to the wg/wingless morphogen gradient, facilitating the precise concentration-dependent regulation of its target genes. Together with Wdr20 and Usp12-46 required for wg/wingless-mediated signaling in the wing imaginal disc and for wg/wingless-dependent regulation of intestinal stem cell proliferation. The sequence is that of WD repeat-containing protein 48 homolog from Culex quinquefasciatus (Southern house mosquito).